Consider the following 792-residue polypeptide: Ribonucleoside-diphosphate reductase large subunit (792 aa).

In terms of domain architecture, ATP-cone spans 1-92 (MHVIKRDGRQ…VSNLHKETKK (92 aa)). ATP contacts are provided by residues 5-6 (KR), 11-17 (ERVMFDK), T53, and D57. At K17 the chain carries N6-acetyllysine. Positions 202 and 217 each coordinate GDP. C218 and C444 are disulfide-bonded. DTTP is bound by residues 226–228 (DSI), K243, R256, and 263–264 (AG). K376 carries the post-translational modification N6-acetyllysine. N427 contributes to the GDP binding site. N427 (proton acceptor) is an active-site residue. The active-site Cysteine radical intermediate is C429. GDP contacts are provided by residues E431 and 604–607 (TAST). E431 serves as the catalytic Proton acceptor. T751 is modified (phosphothreonine).

This sequence belongs to the ribonucleoside diphosphate reductase large chain family. As to quaternary structure, heterodimer of a large and a small subunit. Interacts with RRM2B. Interacts with AHCYL1 which inhibits its activity.

The protein resides in the cytoplasm. The enzyme catalyses a 2'-deoxyribonucleoside 5'-diphosphate + [thioredoxin]-disulfide + H2O = a ribonucleoside 5'-diphosphate + [thioredoxin]-dithiol. Its activity is regulated as follows. Under complex allosteric control mediated by deoxynucleoside triphosphates and ATP binding to separate specificity and activation sites on the M1 subunit. The type of nucleotide bound at the specificity site determines substrate preference. It seems probable that ATP makes the enzyme reduce CDP and UDP, dGTP favors ADP reduction and dTTP favors GDP reduction. Stimulated by ATP and inhibited by dATP binding to the activity site, the dATP inhibition is mediated by AHCYL1 which stabilizes dATP in the site. In terms of biological role, provides the precursors necessary for DNA synthesis. Catalyzes the biosynthesis of deoxyribonucleotides from the corresponding ribonucleotides. This is Ribonucleoside-diphosphate reductase large subunit (Rrm1) from Mus musculus (Mouse).